The following is a 220-amino-acid chain: UPF0758 protein CKO_05095 (220 aa).

In terms of domain architecture, MPN spans 98–220; it reads ALLSPEMTRE…YVSFAERGWI (123 aa). Zn(2+) is bound by residues His-169, His-171, and Asp-182. The short motif at 169 to 182 is the JAMM motif element; sequence HNHPSGCAEPSKAD.

It belongs to the UPF0758 family. YicR subfamily.

This is UPF0758 protein CKO_05095 from Citrobacter koseri (strain ATCC BAA-895 / CDC 4225-83 / SGSC4696).